Reading from the N-terminus, the 351-residue chain is Translation initiation factor eIF2B subunit beta (351 aa).

The protein belongs to the eIF-2B alpha/beta/delta subunits family. In terms of assembly, component of the translation initiation factor 2B (eIF2B) complex which is a heterodecamer of two sets of five different subunits: alpha, beta, gamma, delta and epsilon. Subunits alpha, beta and delta comprise a regulatory subcomplex and subunits epsilon and gamma comprise a catalytic subcomplex. Within the complex, the hexameric regulatory complex resides at the center, with the two heterodimeric catalytic subcomplexes bound on opposite sides.

The protein localises to the cytoplasm. Its subcellular location is the cytosol. With respect to regulation, activated by the chemical integrated stress response (ISR) inhibitor ISRIB which stimulates guanine nucleotide exchange factor activity for both phosphorylated and unphosphorylated eIF2. Functionally, acts as a component of the translation initiation factor 2B (eIF2B) complex, which catalyzes the exchange of GDP for GTP on eukaryotic initiation factor 2 (eIF2) gamma subunit. Its guanine nucleotide exchange factor activity is repressed when bound to eIF2 complex phosphorylated on the alpha subunit, thereby limiting the amount of methionyl-initiator methionine tRNA available to the ribosome and consequently global translation is repressed. This chain is Translation initiation factor eIF2B subunit beta (EIF2B2), found in Oryctolagus cuniculus (Rabbit).